The chain runs to 150 residues: Aspartate 1-decarboxylase 2 (150 aa).

Ser-24 acts as the Schiff-base intermediate with substrate; via pyruvic acid in catalysis. Ser-24 carries the post-translational modification Pyruvic acid (Ser). Thr-56 provides a ligand contact to substrate. Tyr-57 functions as the Proton donor in the catalytic mechanism. 72–74 (GAA) lines the substrate pocket.

It belongs to the PanD family. As to quaternary structure, heterooctamer of four alpha and four beta subunits. Pyruvate is required as a cofactor. Post-translationally, is synthesized initially as an inactive proenzyme, which is activated by self-cleavage at a specific serine bond to produce a beta-subunit with a hydroxyl group at its C-terminus and an alpha-subunit with a pyruvoyl group at its N-terminus.

The protein resides in the cytoplasm. The catalysed reaction is L-aspartate + H(+) = beta-alanine + CO2. The protein operates within cofactor biosynthesis; (R)-pantothenate biosynthesis; beta-alanine from L-aspartate: step 1/1. In terms of biological role, catalyzes the pyruvoyl-dependent decarboxylation of aspartate to produce beta-alanine. The protein is Aspartate 1-decarboxylase 2 of Mesorhizobium japonicum (strain LMG 29417 / CECT 9101 / MAFF 303099) (Mesorhizobium loti (strain MAFF 303099)).